The chain runs to 316 residues: Ribosomal RNA small subunit methyltransferase A (316 aa).

S-adenosyl-L-methionine-binding residues include N33, V35, G60, E81, D110, and N133.

This sequence belongs to the class I-like SAM-binding methyltransferase superfamily. rRNA adenine N(6)-methyltransferase family. RsmA subfamily.

It is found in the cytoplasm. It catalyses the reaction adenosine(1518)/adenosine(1519) in 16S rRNA + 4 S-adenosyl-L-methionine = N(6)-dimethyladenosine(1518)/N(6)-dimethyladenosine(1519) in 16S rRNA + 4 S-adenosyl-L-homocysteine + 4 H(+). In terms of biological role, specifically dimethylates two adjacent adenosines (A1518 and A1519) in the loop of a conserved hairpin near the 3'-end of 16S rRNA in the 30S particle. May play a critical role in biogenesis of 30S subunits. This Corynebacterium jeikeium (strain K411) protein is Ribosomal RNA small subunit methyltransferase A.